Consider the following 430-residue polypeptide: MALLHSARVLSGVASAFHPGLAAAASARASSWWAHVEMGPPDPILGVTEAYKRDTNSKKMNLGVGAYRDDNGKPYVLPSVRKAEAQIAAKGLDKEYLPIGGLAEFCRASAELALGENSEVVKSGRFVTVQTISGTGALRIGASFLQRFFKFSRDVFLPKPSWGNHTPIFRDAGMQLQSYRYYDPKTCGFDFTGALEDISKIPEQSVLLLHACAHNPTGVDPRPEQWKEIATVVKKRNLFAFFDMAYQGFASGDGDKDAWAVRHFIEQGINVCLCQSYAKNMGLYGERVGAFTVICKDADEAKRVESQLKILIRPMYSNPPIHGARIASTILTSPDLRKQWLQEVKGMADRIIGMRTQLVSNLKKEGSTHSWQHITDQIGMFCFTGLKPEQVERLTKEFSIYMTKDGRISVAGVTSGNVGYLAHAIHQVTK.

The N-terminal 29 residues, Met1 to Ala29, are a transit peptide targeting the mitochondrion. Residue Thr48 is modified to Phosphothreonine. N6-acetyllysine is present on Lys59. Substrate is bound at residue Gly65. An N6-acetyllysine; alternate modification is found at Lys73. At Lys73 the chain carries N6-succinyllysine; alternate. An N6-acetyllysine modification is found at Lys82. Lys90 carries the post-translational modification N6-acetyllysine; alternate. Lys90 carries the post-translational modification N6-succinyllysine; alternate. Residue Tyr96 is modified to 3'-nitrotyrosine; alternate. Tyr96 carries the post-translational modification Phosphotyrosine; alternate. N6-acetyllysine; alternate is present on Lys122. Lys122 bears the N6-succinyllysine; alternate mark. The residue at position 143 (Ser143) is a Phosphoserine. At Lys159 the chain carries N6-acetyllysine; alternate. The residue at position 159 (Lys159) is an N6-succinyllysine; alternate. Trp162 is a substrate binding site. Position 185 is an N6-acetyllysine; alternate (Lys185). Lys185 carries the post-translational modification N6-succinyllysine; alternate. Asn215 contributes to the substrate binding site. N6-succinyllysine is present on Lys227. Lys234 carries the post-translational modification N6-acetyllysine. Lys279 and Lys296 each carry N6-acetyllysine; alternate. Lys279 carries the post-translational modification N6-(pyridoxal phosphate)lysine; alternate. Lys296 carries the post-translational modification N6-succinyllysine; alternate. N6-acetyllysine is present on Lys302. An N6-acetyllysine; alternate modification is found at Lys309. At Lys309 the chain carries N6-succinyllysine; alternate. Arg313 bears the Asymmetric dimethylarginine mark. Lys338 carries the post-translational modification N6-acetyllysine; alternate. Lys338 is modified (N6-succinyllysine; alternate). Lys345 is modified (N6-acetyllysine). Lys363 carries the post-translational modification N6-acetyllysine; alternate. An N6-succinyllysine; alternate modification is found at Lys363. Residues Lys364 and Lys387 each carry the N6-acetyllysine modification. An N6-acetyllysine; alternate mark is found at Lys396 and Lys404. Residues Lys396 and Lys404 each carry the N6-succinyllysine; alternate modification. Position 407 (Arg407) interacts with substrate.

Belongs to the class-I pyridoxal-phosphate-dependent aminotransferase family. Homodimer. The cofactor is pyridoxal 5'-phosphate.

The protein localises to the mitochondrion matrix. The protein resides in the cell membrane. It carries out the reaction L-aspartate + 2-oxoglutarate = oxaloacetate + L-glutamate. It catalyses the reaction L-kynurenine + 2-oxoglutarate = kynurenate + L-glutamate + H2O. Catalyzes the irreversible transamination of the L-tryptophan metabolite L-kynurenine to form kynurenic acid (KA). As a member of the malate-aspartate shuttle, it has a key role in the intracellular NAD(H) redox balance. Is important for metabolite exchange between mitochondria and cytosol, and for amino acid metabolism. Facilitates cellular uptake of long-chain free fatty acids. In Oryctolagus cuniculus (Rabbit), this protein is Aspartate aminotransferase, mitochondrial (GOT2).